Here is a 483-residue protein sequence, read N- to C-terminus: O-acetyltransferase pboB (483 aa).

Belongs to the fumigaclavine B O-acetyltransferase family. In terms of assembly, monomer.

It functions in the pathway secondary metabolite biosynthesis. In terms of biological role, O-acetyltransferase; part of the gene cluster that mediates the biosynthesis of protubonine B, a hydroxylated and diacetylated cyclo-L-Trp-L-Leu derivative. Within the pathway, pboB catalyzes the acetylation of protubonine C at N-1 of the indoline ring to produce protubonine B. The first step of the protubonine B synthesis is performed by the nonribosomal peptide synthetase pboA that catalyzes the formation of cyclo-L-Trp-L-Leu by condensing L-Leu with L-Trp. The flavin-dependent monooxygenase pboD is responsible for hydroxylation at C-3 of the indole ring and subsequent formation of the pyrrolidine ring, leadind to protubonine D. Protubonine D is further diacetylated by two acetyltransferases, pboB and pboC, to form the final product protubonine B via protubonine C. This chain is O-acetyltransferase pboB, found in Aspergillus ustus.